The chain runs to 2723 residues: Zinc finger protein 292 (2723 aa).

The segment at 569 to 591 (YSCPICAKNFNSKETFVPHVTLH) adopts a C2H2-type 1 zinc-finger fold. The disordered stretch occupies residues 608 to 633 (RLGRPPKITTTNENQKTNTVAKQEQR). The segment covering 615 to 629 (ITTTNENQKTNTVAK) has biased composition (polar residues). Position 654 is a phosphoserine (Ser-654). 5 C2H2-type zinc fingers span residues 681 to 705 (FNCP…VKGH), 722 to 744 (VICQ…LQMH), 750 to 774 (YICI…RKEH), 779 to 803 (AKCM…EAQH), and 807 to 831 (YTCK…LDDH). Residues 825–834 (EKHLDDHSTP) show a composition bias toward basic and acidic residues. Positions 825–860 (EKHLDDHSTPPEKVLPPEAQLNSSGDSIQPSEVNQN) are disordered. Positions 844-860 (QLNSSGDSIQPSEVNQN) are enriched in polar residues. Residues 1098 to 1123 (FSCQVEGCTRTYNSSQSIGKHMKTAH) form a C2H2-type 7 zinc finger. At Lys-1117 the chain carries N6-acetyllysine. At Ser-1159 the chain carries Phosphoserine. The disordered stretch occupies residues 1331 to 1364 (SSTNAQQSAPEKVKKDRGRGPNGKERKPKHNKRA). The span at 1341–1355 (EKVKKDRGRGPNGKE) shows a compositional bias: basic and acidic residues. Residues 1375–1397 (FICSRCYRAFTNPRSLGGHLSKR) form a C2H2-type 8; degenerate zinc finger. Residues 1588–1627 (SFPNSGGPSQNFTSNSSRVSVISGPQNTRSSHLNKKGNSA) show a composition bias toward polar residues. A disordered region spans residues 1588 to 1634 (SFPNSGGPSQNFTSNSSRVSVISGPQNTRSSHLNKKGNSASKRRKKV). A coiled-coil region spans residues 1827-1854 (QSEVSHKEDQIQEILEGLQKLKLENDLS). C2H2-type zinc fingers lie at residues 1902–1927 (FVCQ…GKIH) and 1947–1972 (FKCV…QLVH). The interval 1986–2023 (RPYGRKSQSENVPASRSTQVKKQLAMTEENKKESQPAL) is disordered. Positions 1994 to 2006 (SENVPASRSTQVK) are enriched in polar residues. Lys-2042 carries the N6-acetyllysine modification. The tract at residues 2074–2103 (NTQTKGRKIRRHKKEKEEKKRKKPVSQSLE) is disordered. Positions 2078 to 2097 (KGRKIRRHKKEKEEKKRKKP) are enriched in basic residues. C2H2-type zinc fingers lie at residues 2114-2139 (YRCV…QAVH), 2172-2197 (FRCQ…MKLH), 2216-2241 (FPCD…EADH), and 2256-2281 (YKCD…FNKH). 2 stretches are compositionally biased toward basic residues: residues 2285-2294 (HKAHLIRPRR) and 2312-2322 (KSKHRGTKHSR). Positions 2285 to 2345 (HKAHLIRPRR…KKKNNLENKN (61 aa)) are disordered. Residues 2386–2410 (YPCMIKGCTSVVTSESNIIRHYKCH) form a C2H2-type 15 zinc finger. Over residues 2441 to 2452 (QEGAKNDVKDSD) the composition is skewed to basic and acidic residues. Disordered regions lie at residues 2441–2480 (QEGA…EKDE), 2530–2564 (LKRV…VRKE), and 2606–2631 (QKKN…RKNI). Residues 2453–2470 (TCVSESNDNSRTTATVSQ) show a composition bias toward polar residues. Residues 2606 to 2615 (QKKNTDKDHP) are compositionally biased toward basic and acidic residues.

It belongs to the krueppel C2H2-type zinc-finger protein family.

Its subcellular location is the nucleus. May be involved in transcriptional regulation. The chain is Zinc finger protein 292 (ZNF292) from Homo sapiens (Human).